The primary structure comprises 80 residues: Small ribosomal subunit protein uS17 (80 aa).

Belongs to the universal ribosomal protein uS17 family. Part of the 30S ribosomal subunit.

In terms of biological role, one of the primary rRNA binding proteins, it binds specifically to the 5'-end of 16S ribosomal RNA. This chain is Small ribosomal subunit protein uS17, found in Cereibacter sphaeroides (strain ATCC 17029 / ATH 2.4.9) (Rhodobacter sphaeroides).